A 664-amino-acid chain; its full sequence is Putative peroxisomal acyl-coenzyme A oxidase 1.2 (664 aa).

Residue 399–404 (CGGHGY) participates in FAD binding. A Microbody targeting signal motif is present at residues 662–664 (AKL).

The protein belongs to the acyl-CoA oxidase family. FAD is required as a cofactor.

It is found in the peroxisome. It catalyses the reaction a 2,3-saturated acyl-CoA + O2 = a (2E)-enoyl-CoA + H2O2. In terms of biological role, catalyzes the desaturation of acyl-CoAs to 2-trans-enoyl-CoAs. In Arabidopsis thaliana (Mouse-ear cress), this protein is Putative peroxisomal acyl-coenzyme A oxidase 1.2 (ACX1.2).